A 286-amino-acid chain; its full sequence is Eukaryotic translation initiation factor 3 subunit J (286 aa).

Disordered regions lie at residues 1–35, 141–162, and 229–258; these read MSWD…DSWD, AASG…HPLF, and KAER…AVKT. A compositionally biased stretch (acidic residues) spans 21-35; sequence WEEEGNDEPLLDSWD. Residues 35–75 adopt a coiled-coil conformation; that stretch reads DIDEEEVARKKKEEEAKKKAEKEALKKKQEESKAKKLSKNK.

Belongs to the eIF-3 subunit J family. In terms of assembly, component of the eukaryotic translation initiation factor 3 (eIF-3) complex.

Its subcellular location is the cytoplasm. Component of the eukaryotic translation initiation factor 3 (eIF-3) complex, which is involved in protein synthesis of a specialized repertoire of mRNAs and, together with other initiation factors, stimulates binding of mRNA and methionyl-tRNAi to the 40S ribosome. The eIF-3 complex specifically targets and initiates translation of a subset of mRNAs involved in cell proliferation. The polypeptide is Eukaryotic translation initiation factor 3 subunit J (Debaryomyces hansenii (strain ATCC 36239 / CBS 767 / BCRC 21394 / JCM 1990 / NBRC 0083 / IGC 2968) (Yeast)).